Consider the following 818-residue polypeptide: Actin filament-associated protein 1-like 2 (818 aa).

Residue Y56 is modified to Phosphotyrosine. Positions 66 to 163 (QNAESQGKAP…SKGKSAPYQW (98 aa)) are disordered. Polar residues predominate over residues 85–94 (EPSQHSSAPQ). The span at 123–139 (YYEEAEPYDTSLNEDGE) shows a compositional bias: acidic residues. 2 PH domains span residues 175 to 271 (DARI…EVSG) and 353 to 447 (SLET…SESG). S408 carries the post-translational modification Phosphoserine. Y413 carries the post-translational modification Phosphotyrosine. A Phosphoserine modification is found at S484. A disordered region spans residues 513 to 532 (AAVEPTEEATPVADDPNERE). Residues 652–749 (AEIKLGKNRT…VKDNLKKAEA (98 aa)) adopt a coiled-coil conformation. The interval 765–787 (NVSPRPKAVTPASAPDCTPVNSA) is disordered.

Interacts with SRC. Interacts with LCK when tyrosine phosphorylated. Tyrosine phosphorylated (by SRC). As to expression, detected in spleen and thyroid, and at lower levels in kidney, brain, lung and pancreas.

The protein resides in the cytoplasm. In terms of biological role, may play a role in a signaling cascade by enhancing the kinase activity of SRC. Contributes to SRC-regulated transcription activation. This chain is Actin filament-associated protein 1-like 2 (AFAP1L2), found in Homo sapiens (Human).